The primary structure comprises 425 residues: Polyribonucleotide 5'-hydroxyl-kinase Clp1 (425 aa).

Residues Glu-22, Lys-62, and 124-129 (DVGKST) each bind ATP.

The protein belongs to the Clp1 family. Clp1 subfamily. Component of the tRNA splicing endonuclease complex, composed of CLP1, TSEN2, TSEN15, TSEN34 and TSEN54. Component of pre-mRNA cleavage complex II (CF-II). Also associates with numerous components of the pre-mRNA cleavage complex I (CF-I/CFIm), including NUDT21, CPSF2, CPSF3, CPSF6 and CPSF7. Interacts with CSTF2 and SYMPK. The cofactor is Mg(2+). Requires Mn(2+) as cofactor. Ni(2+) is required as a cofactor.

Its subcellular location is the nucleus. It carries out the reaction a 5'-end dephospho-2'-deoxyribonucleoside-DNA + ATP = a 5'-end 5'-phospho-2'-deoxyribonucleoside-DNA + ADP + H(+). The enzyme catalyses a 5'-end dephospho-ribonucleoside-RNA + ATP = a 5'-end 5'-phospho-ribonucleoside-RNA + ADP + H(+). Its function is as follows. Polynucleotide kinase that can phosphorylate the 5'-hydroxyl groups of double-stranded RNA (dsRNA), single-stranded RNA (ssRNA), double-stranded DNA (dsDNA) and double-stranded DNA:RNA hybrids. dsRNA is phosphorylated more efficiently than dsDNA, and the RNA component of a DNA:RNA hybrid is phosphorylated more efficiently than the DNA component. Plays a key role in both tRNA splicing and mRNA 3'-end formation. Component of the tRNA splicing endonuclease complex: phosphorylates the 5'-terminus of the tRNA 3'-exon during tRNA splicing; this phosphorylation event is a prerequisite for the subsequent ligation of the two exon halves and the production of a mature tRNA. Its role in tRNA splicing and maturation is required for cerebellar development. Component of the pre-mRNA cleavage complex II (CF-II), which seems to be required for mRNA 3'-end formation. Also phosphorylates the 5'-terminus of exogenously introduced short interfering RNAs (siRNAs), which is a necessary prerequisite for their incorporation into the RNA-induced silencing complex (RISC). However, endogenous siRNAs and microRNAs (miRNAs) that are produced by the cleavage of dsRNA precursors by DICER1 already contain a 5'-phosphate group, so this protein may be dispensible for normal RNA-mediated gene silencing. This Bos taurus (Bovine) protein is Polyribonucleotide 5'-hydroxyl-kinase Clp1.